The primary structure comprises 615 residues: DNA mismatch repair protein MutL (615 aa).

The segment at 363 to 397 (FAEPAAREPVAPRYTPAPASGSRPAAPWPNAQPGY) is disordered. Positions 364–391 (AEPAAREPVAPRYTPAPASGSRPAAPWP) are enriched in low complexity.

The protein belongs to the DNA mismatch repair MutL/HexB family.

This protein is involved in the repair of mismatches in DNA. It is required for dam-dependent methyl-directed DNA mismatch repair. May act as a 'molecular matchmaker', a protein that promotes the formation of a stable complex between two or more DNA-binding proteins in an ATP-dependent manner without itself being part of a final effector complex. This Shigella boydii serotype 18 (strain CDC 3083-94 / BS512) protein is DNA mismatch repair protein MutL.